Here is a 426-residue protein sequence, read N- to C-terminus: Serine--tRNA ligase (426 aa).

233-235 (TAE) is a binding site for L-serine. 264 to 266 (RSE) is an ATP binding site. Glu-287 contributes to the L-serine binding site. 351-354 (EISS) serves as a coordination point for ATP. Ser-387 serves as a coordination point for L-serine.

Belongs to the class-II aminoacyl-tRNA synthetase family. Type-1 seryl-tRNA synthetase subfamily. Homodimer. The tRNA molecule binds across the dimer.

It localises to the cytoplasm. It catalyses the reaction tRNA(Ser) + L-serine + ATP = L-seryl-tRNA(Ser) + AMP + diphosphate + H(+). It carries out the reaction tRNA(Sec) + L-serine + ATP = L-seryl-tRNA(Sec) + AMP + diphosphate + H(+). The protein operates within aminoacyl-tRNA biosynthesis; selenocysteinyl-tRNA(Sec) biosynthesis; L-seryl-tRNA(Sec) from L-serine and tRNA(Sec): step 1/1. Catalyzes the attachment of serine to tRNA(Ser). Is also able to aminoacylate tRNA(Sec) with serine, to form the misacylated tRNA L-seryl-tRNA(Sec), which will be further converted into selenocysteinyl-tRNA(Sec). In Francisella philomiragia subsp. philomiragia (strain ATCC 25017 / CCUG 19701 / FSC 153 / O#319-036), this protein is Serine--tRNA ligase.